A 147-amino-acid polypeptide reads, in one-letter code: Nucleoside diphosphate kinase (147 aa).

Residues Lys-9, Phe-57, Arg-85, Thr-91, Arg-102, and Asn-112 each contribute to the ATP site. His-115 serves as the catalytic Pros-phosphohistidine intermediate.

This sequence belongs to the NDK family. In terms of assembly, homotetramer. Mg(2+) is required as a cofactor.

Its subcellular location is the cytoplasm. The catalysed reaction is a 2'-deoxyribonucleoside 5'-diphosphate + ATP = a 2'-deoxyribonucleoside 5'-triphosphate + ADP. It carries out the reaction a ribonucleoside 5'-diphosphate + ATP = a ribonucleoside 5'-triphosphate + ADP. Major role in the synthesis of nucleoside triphosphates other than ATP. The ATP gamma phosphate is transferred to the NDP beta phosphate via a ping-pong mechanism, using a phosphorylated active-site intermediate. The chain is Nucleoside diphosphate kinase from Listeria innocua serovar 6a (strain ATCC BAA-680 / CLIP 11262).